The primary structure comprises 126 residues: Fluoride-specific ion channel FluC (126 aa).

A run of 4 helical transmembrane segments spans residues 4 to 24 (LLLV…TSAW), 36 to 56 (GTLL…TASL), 67 to 85 (LFLA…SFNY), and 101 to 121 (AYLL…TLLV). Na(+)-binding residues include Gly-75 and Thr-78.

Belongs to the fluoride channel Fluc/FEX (TC 1.A.43) family.

It localises to the cell inner membrane. The catalysed reaction is fluoride(in) = fluoride(out). With respect to regulation, na(+) is not transported, but it plays an essential structural role and its presence is essential for fluoride channel function. Fluoride-specific ion channel. Important for reducing fluoride concentration in the cell, thus reducing its toxicity. The chain is Fluoride-specific ion channel FluC from Anaeromyxobacter sp. (strain K).